We begin with the raw amino-acid sequence, 434 residues long: Serine hydroxymethyltransferase 2 (434 aa).

(6S)-5,6,7,8-tetrahydrofolate is bound by residues leucine 136 and 140–142 (GHL). Lysine 245 carries the post-translational modification N6-(pyridoxal phosphate)lysine.

This sequence belongs to the SHMT family. In terms of assembly, homodimer. Requires pyridoxal 5'-phosphate as cofactor.

It is found in the cytoplasm. The enzyme catalyses (6R)-5,10-methylene-5,6,7,8-tetrahydrofolate + glycine + H2O = (6S)-5,6,7,8-tetrahydrofolate + L-serine. It participates in one-carbon metabolism; tetrahydrofolate interconversion. Its pathway is amino-acid biosynthesis; glycine biosynthesis; glycine from L-serine: step 1/1. Catalyzes the reversible interconversion of serine and glycine with tetrahydrofolate (THF) serving as the one-carbon carrier. This reaction serves as the major source of one-carbon groups required for the biosynthesis of purines, thymidylate, methionine, and other important biomolecules. Also exhibits THF-independent aldolase activity toward beta-hydroxyamino acids, producing glycine and aldehydes, via a retro-aldol mechanism. This chain is Serine hydroxymethyltransferase 2, found in Rhodopseudomonas palustris (strain ATCC BAA-98 / CGA009).